Reading from the N-terminus, the 268-residue chain is Centromere protein Q (268 aa).

Residues 1–80 (MSGKANASKK…KTWQPLSKST (80 aa)) are disordered. A phosphoserine mark is found at Ser31 and Ser50. The segment covering 58–72 (TNLKHGKTAASKRKT) has biased composition (basic residues). Residues 170 to 206 (ELMTGNIQSLKNKIQILASEVEEEEERVKQMHQINSS) adopt a coiled-coil conformation. Position 249 is a phosphoserine (Ser249).

This sequence belongs to the CENP-Q/OKP1 family. Component of the CENPA-CAD complex, composed of CENPI, CENPK, CENPL, CENPO, CENPP, CENPQ, CENPR and CENPS. The CENPA-CAD complex interacts with the CENPA-NAC complex, at least composed of CENPA, CENPC, CENPH, CENPM, CENPN, CENPT and CENPU. In terms of processing, phosphorylation at Ser-50 is essential for CENPE recruitment to kinetochores and orderly chromosome congression.

The protein resides in the nucleus. The protein localises to the chromosome. It is found in the centromere. Component of the CENPA-CAD (nucleosome distal) complex, a complex recruited to centromeres which is involved in assembly of kinetochore proteins, mitotic progression and chromosome segregation. May be involved in incorporation of newly synthesized CENPA into centromeres via its interaction with the CENPA-NAC complex. Plays an important role in chromosome congression and in the recruitment of CENP-O complex (which comprises CENPO, CENPP, CENPQ and CENPU), CENPE and PLK1 to the kinetochores. This chain is Centromere protein Q (CENPQ), found in Homo sapiens (Human).